Here is a 96-residue protein sequence, read N- to C-terminus: Small ribosomal subunit protein uS19 (96 aa).

It belongs to the universal ribosomal protein uS19 family.

Functionally, protein S19 forms a complex with S13 that binds strongly to the 16S ribosomal RNA. The polypeptide is Small ribosomal subunit protein uS19 (Gemmatimonas aurantiaca (strain DSM 14586 / JCM 11422 / NBRC 100505 / T-27)).